Consider the following 590-residue polypeptide: Arginine--tRNA ligase (590 aa).

The short motif at 138-148 is the 'HIGH' region element; that stretch reads ANPTGPLHIGH.

This sequence belongs to the class-I aminoacyl-tRNA synthetase family. In terms of assembly, monomer.

Its subcellular location is the cytoplasm. It catalyses the reaction tRNA(Arg) + L-arginine + ATP = L-arginyl-tRNA(Arg) + AMP + diphosphate. This Orientia tsutsugamushi (strain Ikeda) (Rickettsia tsutsugamushi) protein is Arginine--tRNA ligase.